We begin with the raw amino-acid sequence, 137 residues long: Protein archease (137 aa).

Ca(2+) contacts are provided by Asp-11, Asp-136, and Ile-137.

It belongs to the archease family.

Functionally, activates the tRNA-splicing ligase complex by facilitating the enzymatic turnover of catalytic subunit RtcB. Acts by promoting the guanylylation of RtcB, a key intermediate step in tRNA ligation. Can also alter the NTP specificity of RtcB such that ATP, dGTP or ITP is used efficiently. This is Protein archease from Archaeoglobus fulgidus (strain ATCC 49558 / DSM 4304 / JCM 9628 / NBRC 100126 / VC-16).